The following is a 620-amino-acid chain: Cilia- and flagella-associated protein 52 (620 aa).

WD repeat units lie at residues 62-106, 109-150, 156-195, 203-242, 288-327, 330-369, 372-411, 415-454, 459-498, 500-539, 543-582, and 585-620; these read GHSN…LMAR, LHKG…AICG, LNVG…RKIW, QMKR…LADT, QLQG…ETLV, CHFE…ELLR, VPNM…LMYV, AHRI…QKLE, EHKS…RNQM, LANT…GIRE, SLSG…VTHV, and GHSG…PFPS.

It belongs to the CFAP52 family. As to quaternary structure, microtubule inner protein component of sperm flagellar doublet microtubules. Interacts with BRCA2. Interacts with the CCT chaperonin complex. Interacts with HSP70. Interacts with AK8. Interacts with CFAP45. Interacts with DNAI1. Interacts with IQDC. Expressed in respiratory cells and sperm (at protein level).

It is found in the cytoplasm. The protein localises to the cytoskeleton. Its subcellular location is the cilium axoneme. It localises to the flagellum axoneme. In terms of biological role, microtubule inner protein (MIP) part of the dynein-decorated doublet microtubules (DMTs) in cilia axoneme. Important for proper ciliary and flagellar beating. May act in cooperation with CFAP45 and axonemal dynein subunit DNAH11. May play a role in cell growth and/or survival. The polypeptide is Cilia- and flagella-associated protein 52 (CFAP52) (Sus scrofa (Pig)).